The sequence spans 237 residues: B3 domain-containing protein Os03g0184500 (237 aa).

The TF-B3 DNA-binding region spans 137–228 (FVKPMLHSHV…TFKVHIIRAT (92 aa)).

It localises to the nucleus. The protein is B3 domain-containing protein Os03g0184500 of Oryza sativa subsp. japonica (Rice).